Consider the following 396-residue polypeptide: MHLLVHPNGSKYWRLQYRYEGKQKMLALGVYPEITLADARVRRDEARKLLANGVDPGDKKKNDKVEQSKARTFKEVAIEWHGTNKKWSEDHAHRVLKSLEDNLFAALGERNIAELKTRDLLAPIKAVEMSGRLEVAARLQQRTTAIMRYAVQSGLIDYNPAQEMAGAVASCNRQHRPALELKRIPELLTKIDSYTGRPLTRWAIELTLLIFIRSSELRFARWSEIDFEASIWTIPPEREPIPGVKHSHRGSKMRTTHLVPLSTQALAILKQIKQFYGAHDLIFIGDHDSHKPMSENTVNSALRVMGYDTKVEVCGHGFRTMACSSLVESGLWSRDAVERQMSHMARNSVRAAYIHKAEHLEERRLMLQWWADFLDVNRERFISPFEYAKINNPLKQ.

Residues 71-151 (RTFKEVAIEW…RTTAIMRYAV (81 aa)) form the Core-binding (CB) domain. The region spanning 174 to 367 (QHRPALELKR…EHLEERRLML (194 aa)) is the Tyr recombinase domain. Residues Arg-213, Lys-252, His-316, Arg-319, and His-343 contribute to the active site. Residue Tyr-353 is the O-(3'-phospho-DNA)-tyrosine intermediate of the active site.

The protein belongs to the 'phage' integrase family.

The polypeptide is Putative protein IntB (intB) (Escherichia coli (strain K12)).